A 444-amino-acid chain; its full sequence is Glutamyl-tRNA reductase (444 aa).

Residues T49–R52, S109, E114–Q116, and Q120 each bind substrate. The active-site Nucleophile is the C50. An NADP(+)-binding site is contributed by G189–G194.

This sequence belongs to the glutamyl-tRNA reductase family. In terms of assembly, homodimer.

It catalyses the reaction (S)-4-amino-5-oxopentanoate + tRNA(Glu) + NADP(+) = L-glutamyl-tRNA(Glu) + NADPH + H(+). The protein operates within porphyrin-containing compound metabolism; protoporphyrin-IX biosynthesis; 5-aminolevulinate from L-glutamyl-tRNA(Glu): step 1/2. Catalyzes the NADPH-dependent reduction of glutamyl-tRNA(Glu) to glutamate 1-semialdehyde (GSA). The chain is Glutamyl-tRNA reductase from Bacillus anthracis (strain A0248).